Consider the following 596-residue polypeptide: Sphingomyelinase C 1 (596 aa).

Positions 1-36 are cleaved as a signal peptide; that stretch reads MITKRNIPCKKNWKYKKKSISLTLITICYMFLFLTS. Residues 63–118 form a disordered region; the sequence is KIEDSTNTDPSSNVNEEDENSINANANDNAPSDSDSSNPRSPDKNPVNPTSPNSSS. The span at 67-76 shows a compositional bias: polar residues; the sequence is STNTDPSSNV. A compositionally biased stretch (low complexity) spans 83–118; it reads SINANANDNAPSDSDSSNPRSPDKNPVNPTSPNSSS.

Its subcellular location is the secreted. The enzyme catalyses a sphingomyelin + H2O = phosphocholine + an N-acylsphing-4-enine + H(+). This is Sphingomyelinase C 1 (sph1) from Leptospira interrogans serogroup Icterohaemorrhagiae serovar copenhageni (strain Fiocruz L1-130).